We begin with the raw amino-acid sequence, 599 residues long: Elongation factor 4 (599 aa).

Positions 2–184 (KNIRNFSIIA…RLVRDIPPPE (183 aa)) constitute a tr-type G domain. Residues 14–19 (DHGKST) and 131–134 (NKID) contribute to the GTP site.

This sequence belongs to the TRAFAC class translation factor GTPase superfamily. Classic translation factor GTPase family. LepA subfamily.

It is found in the cell inner membrane. The catalysed reaction is GTP + H2O = GDP + phosphate + H(+). Required for accurate and efficient protein synthesis under certain stress conditions. May act as a fidelity factor of the translation reaction, by catalyzing a one-codon backward translocation of tRNAs on improperly translocated ribosomes. Back-translocation proceeds from a post-translocation (POST) complex to a pre-translocation (PRE) complex, thus giving elongation factor G a second chance to translocate the tRNAs correctly. Binds to ribosomes in a GTP-dependent manner. In Escherichia fergusonii (strain ATCC 35469 / DSM 13698 / CCUG 18766 / IAM 14443 / JCM 21226 / LMG 7866 / NBRC 102419 / NCTC 12128 / CDC 0568-73), this protein is Elongation factor 4.